The following is a 188-amino-acid chain: dCTP deaminase (188 aa).

DCTP is bound by residues Lys-111–Arg-116, Thr-135–Glu-137, Gln-156, Tyr-170, and Gln-180. Glu-137 serves as the catalytic Proton donor/acceptor.

Belongs to the dCTP deaminase family. Homotrimer.

It catalyses the reaction dCTP + H2O + H(+) = dUTP + NH4(+). The protein operates within pyrimidine metabolism; dUMP biosynthesis; dUMP from dCTP (dUTP route): step 1/2. In terms of biological role, catalyzes the deamination of dCTP to dUTP. This Laribacter hongkongensis (strain HLHK9) protein is dCTP deaminase.